The chain runs to 424 residues: Tyrosine--tRNA ligase (424 aa).

Tyrosine 37 contributes to the L-tyrosine binding site. A 'HIGH' region motif is present at residues 42 to 51; that stretch reads PTADSLHLGH. 2 residues coordinate L-tyrosine: tyrosine 175 and glutamine 179. The short motif at 235-239 is the 'KMSKS' region element; it reads KFGKT. Lysine 238 contacts ATP. One can recognise an S4 RNA-binding domain in the interval 357 to 414; that stretch reads ADLQQALVNAELVPSRGQARTMIGSNAVTINGEKQSNAEYNFSDADRLFGRYTLLRRG.

The protein belongs to the class-I aminoacyl-tRNA synthetase family. TyrS type 1 subfamily. As to quaternary structure, homodimer.

The protein localises to the cytoplasm. The enzyme catalyses tRNA(Tyr) + L-tyrosine + ATP = L-tyrosyl-tRNA(Tyr) + AMP + diphosphate + H(+). Catalyzes the attachment of tyrosine to tRNA(Tyr) in a two-step reaction: tyrosine is first activated by ATP to form Tyr-AMP and then transferred to the acceptor end of tRNA(Tyr). The chain is Tyrosine--tRNA ligase from Serratia proteamaculans (strain 568).